Consider the following 288-residue polypeptide: MITKTTRWPSPAKLNLFLYINGQQENGYHELQTLFQFIDLCDHLTITSNQSGQITLAPDIPGVKTEDNLIWKAATLLQQHSQCEFGAHIEIEKILPMGGGIGGGSSNAATVLIALNFLWQLNLSNDTLAALGVKLGADVPIFVHGFAAFAEGIGEKLQPATPKELWYVLIKPEVSIATVDVFTHPDLVRNTPKQPLNALLEATYVNDCEKIVRSVYPEVDYQLSWLLEYAPSRLTGTGACVFAEFNSEKEAQDVYSLIPDNATGFIARGMNTSPLNRTLEEYKSLCKI.

Lys-13 is an active-site residue. Position 96–106 (96–106 (PMGGGIGGGSS)) interacts with ATP. Residue Asp-138 is part of the active site.

Belongs to the GHMP kinase family. IspE subfamily.

It catalyses the reaction 4-CDP-2-C-methyl-D-erythritol + ATP = 4-CDP-2-C-methyl-D-erythritol 2-phosphate + ADP + H(+). It participates in isoprenoid biosynthesis; isopentenyl diphosphate biosynthesis via DXP pathway; isopentenyl diphosphate from 1-deoxy-D-xylulose 5-phosphate: step 3/6. Catalyzes the phosphorylation of the position 2 hydroxy group of 4-diphosphocytidyl-2C-methyl-D-erythritol. The chain is 4-diphosphocytidyl-2-C-methyl-D-erythritol kinase from Aliivibrio fischeri (strain MJ11) (Vibrio fischeri).